Here is a 388-residue protein sequence, read N- to C-terminus: Norsolorinic acid reductase (388 aa).

Y74 (proton donor) is an active-site residue. Position 233–243 (G233–A243) interacts with NADP(+).

Belongs to the aldo/keto reductase family. Aldo/keto reductase 2 subfamily.

The protein operates within mycotoxin biosynthesis; aflatoxin biosynthesis. This chain is Norsolorinic acid reductase (norA), found in Aspergillus flavus (strain ATCC 200026 / FGSC A1120 / IAM 13836 / NRRL 3357 / JCM 12722 / SRRC 167).